A 99-amino-acid polypeptide reads, in one-letter code: Probable small ribosomal subunit protein cS23 (99 aa).

It belongs to the chloroplast-specific ribosomal protein cS23 family. As to quaternary structure, part of the 30S ribosomal subunit.

In terms of biological role, probably a ribosomal protein or a ribosome-associated protein. The protein is Probable small ribosomal subunit protein cS23 of Synechococcus sp. (strain JA-2-3B'a(2-13)) (Cyanobacteria bacterium Yellowstone B-Prime).